We begin with the raw amino-acid sequence, 551 residues long: Prunin 1 Pru du 6.0101 (551 aa).

An N-terminal signal peptide occupies residues 1–20 (MAKAFVFSLCLLLVFNGCLA). Intrachain disulfides connect C32-C65 and C108-C374. One can recognise a Cupin type-1 1 domain in the interval 37–312 (LQAREPDNRI…ALNVNEETAR (276 aa)). Disordered stretches follow at residues 111–194 (TFEE…QKTR), 238–293 (NPRK…NVFS), and 311–361 (ARNL…QQQG). Low complexity-rich tracts occupy residues 114-124 (ESQQSSQQGRQ), 132-148 (QQQQQGEQGRQQGQQEQ), and 168-185 (QEQQQGQQGRPQQQQQFR). IgE-binding stretches follow at residues 118-132 (SSQQGRQQEQEQERQ), 145-159 (QQEQQQERQGRQQGR), 161-175 (QQEEGRQQEQQQGQQ), and 225-239 (LFHVSSDHNQLDQNP). A compositionally biased stretch (low complexity) spans 254–275 (QQGQSQPRQQGEQGRPGQHQQP). The segment at 281–295 (QQEQQGSGNNVFSGF) is igE-binding. Composition is skewed to polar residues over residues 282–293 (QEQQGSGNNVFS) and 311–323 (ARNLQGQNDNRNQ). Over residues 339–350 (GRQEREHEERQQ) the composition is skewed to basic and acidic residues. A compositionally biased stretch (low complexity) spans 351–361 (EQLQQERQQQG). The NGXEET; peptidase recognition motif motif lies at 367 to 372 (NGLEET). The region spanning 380 to 529 (ENIGNPERAD…AYQISREQAR (150 aa)) is the Cupin type-1 2 domain. Positions 510-524 (RALPDEVLANAYQIS) are igE-binding.

It belongs to the 11S seed storage protein (globulins) family. In terms of assembly, hexamer of two trimers; each subunit is composed of an acidic and a basic chain derived from a single precursor and linked by a disulfide bond. Post-translationally, proteolytically processed from a single precursor to produce an acidic and a basic chain that are linked by a disulfide bond. Expressed in seed (at protein level).

Its function is as follows. Seed storage protein. The polypeptide is Prunin 1 Pru du 6.0101 (Prunus dulcis (Almond)).